The following is a 340-amino-acid chain: NADH-quinone oxidoreductase subunit H (340 aa).

8 consecutive transmembrane segments (helical) span residues 4 to 24 (TIGI…PLLI), 78 to 98 (YLFV…WAVI), 113 to 133 (VLYL…AGWA), 151 to 171 (VSYE…AGSM), 184 to 204 (MLHW…IAGI), 244 to 264 (SMIL…LSPF), 273 to 293 (IFFV…FLFV), and 316 to 336 (VLIP…VAHV).

The protein belongs to the complex I subunit 1 family. In terms of assembly, NDH-1 is composed of 14 different subunits. Subunits NuoA, H, J, K, L, M, N constitute the membrane sector of the complex.

The protein localises to the cell inner membrane. It catalyses the reaction a quinone + NADH + 5 H(+)(in) = a quinol + NAD(+) + 4 H(+)(out). Its function is as follows. NDH-1 shuttles electrons from NADH, via FMN and iron-sulfur (Fe-S) centers, to quinones in the respiratory chain. The immediate electron acceptor for the enzyme in this species is believed to be ubiquinone. Couples the redox reaction to proton translocation (for every two electrons transferred, four hydrogen ions are translocated across the cytoplasmic membrane), and thus conserves the redox energy in a proton gradient. This subunit may bind ubiquinone. The chain is NADH-quinone oxidoreductase subunit H from Legionella pneumophila (strain Corby).